The chain runs to 643 residues: UvrABC system protein C (643 aa).

The region spanning 25 to 104 is the GIY-YIG domain; the sequence is AEPGVYFMRD…IKQHQPHFNV (80 aa). Residues 214–249 enclose the UVR domain; it reads SELVELLEAQMLQAAENLEFEKAAKIRDQIRGLEGL.

It belongs to the UvrC family. As to quaternary structure, interacts with UvrB in an incision complex.

Its subcellular location is the cytoplasm. The UvrABC repair system catalyzes the recognition and processing of DNA lesions. UvrC both incises the 5' and 3' sides of the lesion. The N-terminal half is responsible for the 3' incision and the C-terminal half is responsible for the 5' incision. This is UvrABC system protein C from Synechococcus elongatus (strain ATCC 33912 / PCC 7942 / FACHB-805) (Anacystis nidulans R2).